The chain runs to 417 residues: Chaperone SurA (417 aa).

The signal sequence occupies residues Met1–Ala12. 2 PpiC domains span residues Ser163–Glu264 and Arg273–Gly372.

Its subcellular location is the periplasm. The enzyme catalyses [protein]-peptidylproline (omega=180) = [protein]-peptidylproline (omega=0). Its function is as follows. Chaperone involved in the correct folding and assembly of outer membrane proteins. Recognizes specific patterns of aromatic residues and the orientation of their side chains, which are found more frequently in integral outer membrane proteins. May act in both early periplasmic and late outer membrane-associated steps of protein maturation. The chain is Chaperone SurA from Pseudomonas aeruginosa (strain ATCC 15692 / DSM 22644 / CIP 104116 / JCM 14847 / LMG 12228 / 1C / PRS 101 / PAO1).